Consider the following 631-residue polypeptide: Glutamyl-tRNA(Gln) amidotransferase subunit E (631 aa).

It belongs to the GatB/GatE family. GatE subfamily. As to quaternary structure, heterodimer of GatD and GatE.

The enzyme catalyses L-glutamyl-tRNA(Gln) + L-glutamine + ATP + H2O = L-glutaminyl-tRNA(Gln) + L-glutamate + ADP + phosphate + H(+). Its function is as follows. Allows the formation of correctly charged Gln-tRNA(Gln) through the transamidation of misacylated Glu-tRNA(Gln) in organisms which lack glutaminyl-tRNA synthetase. The reaction takes place in the presence of glutamine and ATP through an activated gamma-phospho-Glu-tRNA(Gln). The GatDE system is specific for glutamate and does not act on aspartate. In Methanococcus maripaludis (strain DSM 14266 / JCM 13030 / NBRC 101832 / S2 / LL), this protein is Glutamyl-tRNA(Gln) amidotransferase subunit E.